We begin with the raw amino-acid sequence, 316 residues long: Glycine--tRNA ligase alpha subunit (316 aa).

This sequence belongs to the class-II aminoacyl-tRNA synthetase family. Tetramer of two alpha and two beta subunits.

It localises to the cytoplasm. The catalysed reaction is tRNA(Gly) + glycine + ATP = glycyl-tRNA(Gly) + AMP + diphosphate. This Paracoccus denitrificans (strain Pd 1222) protein is Glycine--tRNA ligase alpha subunit.